Consider the following 235-residue polypeptide: Octanoyltransferase LIP2, mitochondrial (235 aa).

Residues 1–32 (MRSPRTLEVWKLGTVNYLKSLKLQEKLVSERK) constitute a mitochondrion transit peptide. Positions 34 to 218 (HQIPDTLLSL…CLAKAFSYDD (185 aa)) constitute a BPL/LPL catalytic domain. Substrate contacts are provided by residues 79–86 (RGGDITFH), 147–149 (AIG), and 160–162 (GLA). The active-site Acyl-thioester intermediate is the Cys-178.

This sequence belongs to the LipB family. Expressed in leaves. Expressed in roots, rosette leaves, cauline leaves, stems and siliques.

Its subcellular location is the mitochondrion. It catalyses the reaction octanoyl-[ACP] + L-lysyl-[protein] = N(6)-octanoyl-L-lysyl-[protein] + holo-[ACP] + H(+). Its pathway is protein modification; protein lipoylation via endogenous pathway; protein N(6)-(lipoyl)lysine from octanoyl-[acyl-carrier-protein]: step 1/2. In terms of biological role, catalyzes the transfer of endogenously produced octanoic acid from octanoyl-acyl-carrier-protein onto the lipoyl domains of lipoate-dependent enzymes. Lipoyl-ACP can also act as a substrate although octanoyl-ACP is likely to be the physiological substrate. Together with LIP1 is essential for mitochondrial protein lipoylation during seed development. Required for the lipoylation of mitochondrial 2-oxoglutarate dehydrogenase component E2 proteins in leaves and roots. The sequence is that of Octanoyltransferase LIP2, mitochondrial from Arabidopsis thaliana (Mouse-ear cress).